A 352-amino-acid polypeptide reads, in one-letter code: 4-hydroxy-2-oxovalerate aldolase 4 (352 aa).

In terms of domain architecture, Pyruvate carboxyltransferase spans I9–I261. Position 17–18 (R17–D18) interacts with substrate. Position 18 (D18) interacts with Mn(2+). H21 functions as the Proton acceptor in the catalytic mechanism. Substrate contacts are provided by S171 and H200. The Mn(2+) site is built by H200 and H202. A substrate-binding site is contributed by Y291.

This sequence belongs to the 4-hydroxy-2-oxovalerate aldolase family.

It carries out the reaction (S)-4-hydroxy-2-oxopentanoate = acetaldehyde + pyruvate. This Rhodococcus jostii (strain RHA1) protein is 4-hydroxy-2-oxovalerate aldolase 4.